We begin with the raw amino-acid sequence, 325 residues long: GMP reductase (325 aa).

The active-site Thioimidate intermediate is the Cys173. 202–225 is a binding site for NADP(+); the sequence is IIADGGIRSHGDIAKSVRFGATMV.

This sequence belongs to the IMPDH/GMPR family. GuaC type 2 subfamily.

It catalyses the reaction IMP + NH4(+) + NADP(+) = GMP + NADPH + 2 H(+). Functionally, catalyzes the irreversible NADPH-dependent deamination of GMP to IMP. It functions in the conversion of nucleobase, nucleoside and nucleotide derivatives of G to A nucleotides, and in maintaining the intracellular balance of A and G nucleotides. The sequence is that of GMP reductase from Acidovorax ebreus (strain TPSY) (Diaphorobacter sp. (strain TPSY)).